The primary structure comprises 272 residues: Ribosomal RNA small subunit methyltransferase A (272 aa).

6 residues coordinate S-adenosyl-L-methionine: Asn15, Ile17, Gly42, Glu64, Asp90, and Asn109.

The protein belongs to the class I-like SAM-binding methyltransferase superfamily. rRNA adenine N(6)-methyltransferase family. RsmA subfamily.

Its subcellular location is the cytoplasm. The enzyme catalyses adenosine(1518)/adenosine(1519) in 16S rRNA + 4 S-adenosyl-L-methionine = N(6)-dimethyladenosine(1518)/N(6)-dimethyladenosine(1519) in 16S rRNA + 4 S-adenosyl-L-homocysteine + 4 H(+). In terms of biological role, specifically dimethylates two adjacent adenosines (A1518 and A1519) in the loop of a conserved hairpin near the 3'-end of 16S rRNA in the 30S particle. May play a critical role in biogenesis of 30S subunits. The polypeptide is Ribosomal RNA small subunit methyltransferase A (Wolbachia sp. subsp. Drosophila simulans (strain wRi)).